Consider the following 411-residue polypeptide: Lissencephaly-1 homolog (411 aa).

The 33-residue stretch at 9 to 41 folds into the LisH domain; sequence QREELNQAIADYLGSNGYSSALEAFRKEADISG. The stretch at 56-83 forms a coiled coil; that stretch reads TSVIRLQKKVMELEAKLSEAEKEVIEGA. WD repeat units lie at residues 106–147, 149–187, 191–230, 233–272, 275–334, 337–376, and 379–411; these read GHRA…RSLK, HTSSVQDIAFDSQGKLLASCSADLSIKLWDFQQSYDCVK, GHDHNVSSVAFVPAGDYVLSASRDQTIKMWEVATGYCVKT, GHREWIRMVRVHMDGNIFASCSIDHSIRIWSINSRDCKAE, AHDH…CLFV, GHDNWVRELTFHPGGKYLVSASDDKTIRVWDLRNKRFMKT, and AHQHFCTSVDFHKKLPYVISGSVDNTVKVWECR.

This sequence belongs to the WD repeat LIS1/nudF family.

The protein localises to the cytoplasm. Its subcellular location is the cytoskeleton. It localises to the microtubule organizing center. The protein resides in the centrosome. Its function is as follows. Positively regulates the activity of the minus-end directed microtubule motor protein dynein. May enhance dynein-mediated microtubule sliding by targeting dynein to the microtubule plus end. Required for several dynein- and microtubule-dependent processes. This chain is Lissencephaly-1 homolog, found in Glossina morsitans morsitans (Savannah tsetse fly).